A 464-amino-acid chain; its full sequence is Siroheme synthase (464 aa).

Residues 1 to 203 are precorrin-2 dehydrogenase /sirohydrochlorin ferrochelatase; the sequence is MEFLPLFHNL…GQGAEAERML (203 aa). NAD(+) is bound by residues 22 to 23 and 43 to 44; these read EI and PE. A Phosphoserine modification is found at S128. The uroporphyrinogen-III C-methyltransferase stretch occupies residues 216–464; the sequence is GEVYLVGAGP…AWFEGAQATL (249 aa). P225 is an S-adenosyl-L-methionine binding site. Catalysis depends on D248, which acts as the Proton acceptor. The active-site Proton donor is K270. S-adenosyl-L-methionine is bound by residues 301–303, I306, 331–332, M383, and G412; these read GGD and TA.

The protein in the N-terminal section; belongs to the precorrin-2 dehydrogenase / sirohydrochlorin ferrochelatase family. It in the C-terminal section; belongs to the precorrin methyltransferase family.

The enzyme catalyses uroporphyrinogen III + 2 S-adenosyl-L-methionine = precorrin-2 + 2 S-adenosyl-L-homocysteine + H(+). It carries out the reaction precorrin-2 + NAD(+) = sirohydrochlorin + NADH + 2 H(+). It catalyses the reaction siroheme + 2 H(+) = sirohydrochlorin + Fe(2+). The protein operates within cofactor biosynthesis; adenosylcobalamin biosynthesis; precorrin-2 from uroporphyrinogen III: step 1/1. It participates in cofactor biosynthesis; adenosylcobalamin biosynthesis; sirohydrochlorin from precorrin-2: step 1/1. It functions in the pathway porphyrin-containing compound metabolism; siroheme biosynthesis; precorrin-2 from uroporphyrinogen III: step 1/1. Its pathway is porphyrin-containing compound metabolism; siroheme biosynthesis; siroheme from sirohydrochlorin: step 1/1. The protein operates within porphyrin-containing compound metabolism; siroheme biosynthesis; sirohydrochlorin from precorrin-2: step 1/1. Functionally, multifunctional enzyme that catalyzes the SAM-dependent methylations of uroporphyrinogen III at position C-2 and C-7 to form precorrin-2 via precorrin-1. Then it catalyzes the NAD-dependent ring dehydrogenation of precorrin-2 to yield sirohydrochlorin. Finally, it catalyzes the ferrochelation of sirohydrochlorin to yield siroheme. The chain is Siroheme synthase from Pseudomonas syringae pv. syringae (strain B728a).